Reading from the N-terminus, the 617-residue chain is Proline--tRNA ligase (617 aa).

Belongs to the class-II aminoacyl-tRNA synthetase family. ProS type 1 subfamily. In terms of assembly, homodimer.

It localises to the cytoplasm. It carries out the reaction tRNA(Pro) + L-proline + ATP = L-prolyl-tRNA(Pro) + AMP + diphosphate. Its function is as follows. Catalyzes the attachment of proline to tRNA(Pro) in a two-step reaction: proline is first activated by ATP to form Pro-AMP and then transferred to the acceptor end of tRNA(Pro). As ProRS can inadvertently accommodate and process non-cognate amino acids such as alanine and cysteine, to avoid such errors it has two additional distinct editing activities against alanine. One activity is designated as 'pretransfer' editing and involves the tRNA(Pro)-independent hydrolysis of activated Ala-AMP. The other activity is designated 'posttransfer' editing and involves deacylation of mischarged Ala-tRNA(Pro). The misacylated Cys-tRNA(Pro) is not edited by ProRS. This Streptococcus pneumoniae (strain 70585) protein is Proline--tRNA ligase.